An 87-amino-acid chain; its full sequence is Small ribosomal subunit protein uS17 (87 aa).

The protein belongs to the universal ribosomal protein uS17 family. Part of the 30S ribosomal subunit.

Functionally, one of the primary rRNA binding proteins, it binds specifically to the 5'-end of 16S ribosomal RNA. This Bacillus velezensis (strain DSM 23117 / BGSC 10A6 / LMG 26770 / FZB42) (Bacillus amyloliquefaciens subsp. plantarum) protein is Small ribosomal subunit protein uS17.